The sequence spans 83 residues: Mu-theraphotoxin-Hhn2b 1 (83 aa).

Positions 1 to 21 (MKASMFLALAGLVLLFVVCYA) are cleaved as a signal peptide. Residues 22–48 (SESEEKEFPRELISKIFAVDDFKGEER) constitute a propeptide that is removed on maturation. 3 disulfides stabilise this stretch: Cys-50/Cys-65, Cys-57/Cys-70, and Cys-64/Cys-77. Residue Leu-81 is modified to Leucine amide.

The protein belongs to the neurotoxin 10 (Hwtx-1) family. 14 (Hntx-1) subfamily. Monomer. Expressed by the venom gland.

It localises to the secreted. In terms of biological role, weakly blocks the rat SCN2A/SCN1B (Nav1.2/beta-1) sodium channel (IC(50)=68 uM) and the insect sodium channel para/tipE (IC(50)=4.3 uM), without altering the activation or inactivation kinetics (depressant toxin). The polypeptide is Mu-theraphotoxin-Hhn2b 1 (Cyriopagopus hainanus (Chinese bird spider)).